The sequence spans 316 residues: Ornithine carbamoyltransferase (316 aa).

Residues 59-62 (STRT), glutamine 86, arginine 110, and 137-140 (HPCQ) contribute to the carbamoyl phosphate site. L-ornithine is bound by residues asparagine 168, aspartate 232, and 236–237 (SM). Carbamoyl phosphate-binding positions include 273 to 274 (CL) and arginine 301.

The protein belongs to the aspartate/ornithine carbamoyltransferase superfamily. OTCase family.

It localises to the cytoplasm. The catalysed reaction is carbamoyl phosphate + L-ornithine = L-citrulline + phosphate + H(+). Its pathway is amino-acid biosynthesis; L-arginine biosynthesis; L-arginine from L-ornithine and carbamoyl phosphate: step 1/3. Its function is as follows. Reversibly catalyzes the transfer of the carbamoyl group from carbamoyl phosphate (CP) to the N(epsilon) atom of ornithine (ORN) to produce L-citrulline. The protein is Ornithine carbamoyltransferase of Listeria innocua serovar 6a (strain ATCC BAA-680 / CLIP 11262).